Reading from the N-terminus, the 424-residue chain is Tyrosine--tRNA ligase (424 aa).

Tyr37 is a binding site for L-tyrosine. The 'HIGH' region signature appears at 42-51 (PTADSLHLGH). Lys144 is subject to N6-acetyllysine. 2 residues coordinate L-tyrosine: Tyr175 and Gln179. A 'KMSKS' region motif is present at residues 235-239 (KFGKT). Lys238 provides a ligand contact to ATP. In terms of domain architecture, S4 RNA-binding spans 357–414 (ADLMQALVDSELQPSRGQARKTIASNAITINGEKQSDPEYFFKEEDRLFGRFTLLRRG).

This sequence belongs to the class-I aminoacyl-tRNA synthetase family. TyrS type 1 subfamily. In terms of assembly, homodimer.

It localises to the cytoplasm. It carries out the reaction tRNA(Tyr) + L-tyrosine + ATP = L-tyrosyl-tRNA(Tyr) + AMP + diphosphate + H(+). Its function is as follows. Catalyzes the attachment of tyrosine to tRNA(Tyr) in a two-step reaction: tyrosine is first activated by ATP to form Tyr-AMP and then transferred to the acceptor end of tRNA(Tyr). In Shigella flexneri serotype 5b (strain 8401), this protein is Tyrosine--tRNA ligase.